Reading from the N-terminus, the 276-residue chain is MTWHATLSLDYRLESERSVLRHVHDGPLRVLKSLYPQGDGTCHNVLVHPPGGLVGGDTLDIQIAVGAGAHALITTPGATRFYRSSGEPAVQRTRLRLEALARMEWLPLEAILYSGCQAENHLSFELAPGAELIAWDVTALGLPHAGLPFVRGRFCQHIELPGVWLERGVIDAADTRLLGSPLGLAGQRCMASLFFVTGSALERPRRDLALDGARQILQAHALQSSAGVTCPNPRVVVLRVLAPQVEMAMDLLKKVWAVWRQVLWNQAAVQPRIWAM.

This sequence belongs to the UreD family. As to quaternary structure, ureD, UreF and UreG form a complex that acts as a GTP-hydrolysis-dependent molecular chaperone, activating the urease apoprotein by helping to assemble the nickel containing metallocenter of UreC. The UreE protein probably delivers the nickel.

The protein localises to the cytoplasm. Its function is as follows. Required for maturation of urease via the functional incorporation of the urease nickel metallocenter. The protein is Urease accessory protein UreD of Albidiferax ferrireducens (strain ATCC BAA-621 / DSM 15236 / T118) (Rhodoferax ferrireducens).